Here is a 514-residue protein sequence, read N- to C-terminus: Cytochrome P450 monooxygenase FUS8 (514 aa).

A helical membrane pass occupies residues 28-48 (LTVTKAVGAFIVLFIIIPKVF). N-linked (GlcNAc...) asparagine glycans are attached at residues N225 and N443. C460 provides a ligand contact to heme.

The protein belongs to the cytochrome P450 family. It depends on heme as a cofactor.

It localises to the membrane. Its pathway is mycotoxin biosynthesis. Cytochrome P450 monooxygenase; part of the gene cluster that mediates the biosynthesis of the mycotoxin fusarin C. Within the cluster, FUS1, FUS2, FUS8 and FUS9 are sufficient for fusarin production. The roles of the other FUS members are yet undetermined. The fusarin C synthetase FUS1 is responsible for the condensation of one acetyl-coenzyme A (CoA) unit with six malonyl-CoA units and the amide linkage of the arising heptaketide and homoserine, subsequently releasing the first intermediate, prefusarin, as an alcohol with an open ring structure. The cytochrome P450 monooxygenase FUS8 participates in multiple oxidation processes at carbon C-20 and is able to use the FUS1 product as substrate, resulting in formation of 20-hydroxy-prefusarin. This reaction seems to be essential before the 2-pyrrolidone ring closure can be catalyzed by FUS2, generating 20-hydroxy-fusarin. FUS8 is able to further oxidizes carbon C-20 after ring closure, resulting in the formation of carboxy-fusarin C. As the last step, FUS9 methylates the hydroxyl group at C-21 to generate fusarin C. Fusarin C can then rearrange to epi-fusarin C, the (z)-isomers, and fusarin A and fusarin D. The polypeptide is Cytochrome P450 monooxygenase FUS8 (Gibberella moniliformis (strain M3125 / FGSC 7600) (Maize ear and stalk rot fungus)).